We begin with the raw amino-acid sequence, 251 residues long: MTDSATTNGDDRDPEIELFVKAGIDGESIGNCPFSQRLFMILWLKGVVFNVTTVDLKRKPADLHNLAPGTHPPFLTFNGDVKTDVNKIEEFLEETLTPEKYPKLAAKHRESNTAGIDIFSKFSAYIKNTKQQNNAALERGLTKALRKLDDYLNSPLPEEIDTNTHGDEKGSQRKFLDGDELTLADCNLLPKLHVVKIVAKKYRNYDIPAEMTGLWRYLKNAYARDEFTNTCAADSEIELAYADVARRLSRS.

Residues 1 to 98 are required for insertion into the membrane; the sequence is MTDSATTNGD…EEFLEETLTP (98 aa). The G-site signature appears at 32-35; it reads CPFS. Residues 34–54 form a helical membrane-spanning segment; sequence FSQRLFMILWLKGVVFNVTTV. The 141-residue stretch at 101 to 241 folds into the GST C-terminal domain; that stretch reads YPKLAAKHRE…AADSEIELAY (141 aa).

The protein belongs to the chloride channel CLIC family. As to quaternary structure, component of a multimeric complex consisting of several cytoskeletal proteins, including actin, ezrin, alpha-actinin, gelsolin, and IQGAP1. Interacts with AKAP9. Interacts with TPRN. TPRN, CLIC5 and PTPQR form concentric rings at the base of stereocilia and may form a complex. Interacts with EZR, MYO6 and RDX; the proteins may work together as a complex to stabilize linkages between the plasma membrane and subjacent actin cytoskeleton at the stereocilium base. Detected in lung and inner ear. Detected in embryonic cochlea, on microvilli-covered apical surfaces of interdental cells, columnar cells of Kolliker's organ, and on stereocilia of inner and outer hair cells (at protein level). Also detected in the eye, where it localizes to lens fiber cells in the lens epithelium (at protein level).

The protein resides in the golgi apparatus. The protein localises to the cytoplasm. It is found in the cytoskeleton. Its subcellular location is the microtubule organizing center. It localises to the centrosome. The protein resides in the cell cortex. The protein localises to the membrane. It is found in the apical cell membrane. Its subcellular location is the mitochondrion. It localises to the cell projection. The protein resides in the stereocilium. The catalysed reaction is Na(+)(in) = Na(+)(out). It catalyses the reaction K(+)(in) = K(+)(out). It carries out the reaction chloride(in) = chloride(out). Inhibited by F-actin. In the soluble state, catalyzes glutaredoxin-like thiol disulfide exchange reactions with reduced glutathione as electron donor. Can insert into membranes and form non-selective ion channels almost equally permeable to Na(+), K(+) and Cl(-). Required for normal hearing. Necessary for the formation of stereocilia in the inner ear and normal development of the organ of Corti. Required for the proper localization of PTPRQ and RDX to the stereocilium base during postnatal maturation of hair bundles. Can insert into membranes and form poorly selective ion channels that may also transport chloride ions. Required for the development and/or maintenance of the proper glomerular endothelial cell and podocyte architecture. Plays a role in formation of the lens suture in the eye, which is important for normal optical properties of the lens. The chain is Chloride intracellular channel protein 5 (Clic5) from Mus musculus (Mouse).